The following is a 113-amino-acid chain: Iron-sulfur cluster insertion protein ErpA (113 aa).

Iron-sulfur cluster-binding residues include Cys-41, Cys-105, and Cys-107.

Belongs to the HesB/IscA family. As to quaternary structure, homodimer. The cofactor is iron-sulfur cluster.

In terms of biological role, required for insertion of 4Fe-4S clusters for at least IspG. In Histophilus somni (strain 2336) (Haemophilus somnus), this protein is Iron-sulfur cluster insertion protein ErpA.